A 391-amino-acid polypeptide reads, in one-letter code: Dual-specificity RNA methyltransferase RlmN (391 aa).

The Proton acceptor role is filled by glutamate 112. A Radical SAM core domain is found at 118 to 368; that stretch reads ESDRGTLCIS…VRTPRGRDIL (251 aa). Cysteine 125 and cysteine 371 form a disulfide bridge. [4Fe-4S] cluster is bound by residues cysteine 132, cysteine 136, and cysteine 139. S-adenosyl-L-methionine contacts are provided by residues 197–198, serine 229, 251–253, and asparagine 328; these read GE and SLH. Cysteine 371 functions as the S-methylcysteine intermediate in the catalytic mechanism.

The protein belongs to the radical SAM superfamily. RlmN family. It depends on [4Fe-4S] cluster as a cofactor.

It localises to the cytoplasm. It carries out the reaction adenosine(2503) in 23S rRNA + 2 reduced [2Fe-2S]-[ferredoxin] + 2 S-adenosyl-L-methionine = 2-methyladenosine(2503) in 23S rRNA + 5'-deoxyadenosine + L-methionine + 2 oxidized [2Fe-2S]-[ferredoxin] + S-adenosyl-L-homocysteine. The catalysed reaction is adenosine(37) in tRNA + 2 reduced [2Fe-2S]-[ferredoxin] + 2 S-adenosyl-L-methionine = 2-methyladenosine(37) in tRNA + 5'-deoxyadenosine + L-methionine + 2 oxidized [2Fe-2S]-[ferredoxin] + S-adenosyl-L-homocysteine. Specifically methylates position 2 of adenine 2503 in 23S rRNA and position 2 of adenine 37 in tRNAs. m2A2503 modification seems to play a crucial role in the proofreading step occurring at the peptidyl transferase center and thus would serve to optimize ribosomal fidelity. The protein is Dual-specificity RNA methyltransferase RlmN of Beijerinckia indica subsp. indica (strain ATCC 9039 / DSM 1715 / NCIMB 8712).